Here is a 574-residue protein sequence, read N- to C-terminus: Glycine--tRNA ligase (574 aa).

Residues arginine 96 and glutamate 162 each coordinate substrate. ATP-binding positions include 194 to 196 (RNE), 204 to 209 (IRLREF), 327 to 328 (EC), and 450 to 453 (GIDR). Residue 209–213 (FTQAE) coordinates substrate. 446 to 450 (EPSYG) lines the substrate pocket.

It belongs to the class-II aminoacyl-tRNA synthetase family.

The protein localises to the cytoplasm. The catalysed reaction is tRNA(Gly) + glycine + ATP = glycyl-tRNA(Gly) + AMP + diphosphate. Catalyzes the attachment of glycine to tRNA(Gly). This is Glycine--tRNA ligase from Methanococcus vannielii (strain ATCC 35089 / DSM 1224 / JCM 13029 / OCM 148 / SB).